We begin with the raw amino-acid sequence, 417 residues long: DNA primase DnaG (417 aa).

The region spanning 171–257 (DAIIIVEGRA…SVEDMARKEI (87 aa)) is the Toprim domain. Mg(2+)-binding residues include glutamate 177, aspartate 219, and aspartate 221. The tract at residues 278–325 (VPGEKRTQDLRPQKPGASEQNSIKKENVENENESTPTSFEPISEPAPP) is disordered. The segment covering 279–289 (PGEKRTQDLRP) has biased composition (basic and acidic residues).

The protein belongs to the archaeal DnaG primase family. Forms a ternary complex with MCM helicase and DNA. Mg(2+) serves as cofactor.

The catalysed reaction is ssDNA + n NTP = ssDNA/pppN(pN)n-1 hybrid + (n-1) diphosphate.. Its function is as follows. RNA polymerase that catalyzes the synthesis of short RNA molecules used as primers for DNA polymerase during DNA replication. This chain is DNA primase DnaG, found in Methanosphaerula palustris (strain ATCC BAA-1556 / DSM 19958 / E1-9c).